The sequence spans 459 residues: Argininosuccinate lyase (459 aa).

This sequence belongs to the lyase 1 family. Argininosuccinate lyase subfamily.

It is found in the cytoplasm. It catalyses the reaction 2-(N(omega)-L-arginino)succinate = fumarate + L-arginine. The protein operates within amino-acid biosynthesis; L-arginine biosynthesis; L-arginine from L-ornithine and carbamoyl phosphate: step 3/3. The polypeptide is Argininosuccinate lyase (Lactococcus lactis subsp. cremoris (strain SK11)).